The chain runs to 303 residues: Enoyl-CoA hydratase domain-containing protein 3, mitochondrial (303 aa).

Residues 1–17 constitute a mitochondrion transit peptide; it reads MAAVAVLRAFGASGPMC. Residue Lys110 is modified to N6-succinyllysine.

It belongs to the enoyl-CoA hydratase/isomerase family. In terms of tissue distribution, expressed in adipocytes. Expressed in blood cells, with higher expression in patients with low coronary lesions.

Its subcellular location is the mitochondrion. Functionally, may play a role in fatty acid biosynthesis and insulin sensitivity. The protein is Enoyl-CoA hydratase domain-containing protein 3, mitochondrial of Homo sapiens (Human).